A 213-amino-acid polypeptide reads, in one-letter code: Ribosomal RNA small subunit methyltransferase G (213 aa).

Residues Gly-77, Phe-82, 130–131 (IE), and Arg-146 each bind S-adenosyl-L-methionine.

Belongs to the methyltransferase superfamily. RNA methyltransferase RsmG family.

Its subcellular location is the cytoplasm. The catalysed reaction is guanosine(527) in 16S rRNA + S-adenosyl-L-methionine = N(7)-methylguanosine(527) in 16S rRNA + S-adenosyl-L-homocysteine. Its function is as follows. Specifically methylates the N7 position of guanine in position 527 of 16S rRNA. In Bartonella tribocorum (strain CIP 105476 / IBS 506), this protein is Ribosomal RNA small subunit methyltransferase G.